A 425-amino-acid chain; its full sequence is MLDLKRIRTDFDTVAAKLKNRGVSEDTLTHLKELDEKRRALLVQSEELKAERNIASAAIAQAKRQKEDATQQIADMQKVSADIKTIDNQLVAIDQQVTDIITVLPNTPHDSVPVGADEEDNVEIRRWGTPRDFDFEVKAHWDLGEDLDILDWERGAKVTGARFLFYKNLGARLERALYNFMLDEHIKEGYQEIITPYMVNHDSMFGTGQYPKFKEDTFELADTNFVLIPTAEVPLTNYYRGEILDGKELPIYFTAMSPSFRSEAGSAGRDTRGLIRLHQFHKVEMVKFAKPEESYQELEKMTANAENILQKLGLPYRVISLCTGDMGFSAAKTYDLEVWIPAQNTYREISSCSNTEDFQARRAQIRYRDEADGKVKLLHTLNGSGLAVGRTVAAILENYQNEDGSVTIPEVLRSYMGGETVISPK.

230–232 (TAE) is a binding site for L-serine. 261-263 (RSE) contacts ATP. Glu-284 is an L-serine binding site. 348–351 (EISS) contributes to the ATP binding site. L-serine is bound at residue Ser-384.

This sequence belongs to the class-II aminoacyl-tRNA synthetase family. Type-1 seryl-tRNA synthetase subfamily. In terms of assembly, homodimer. The tRNA molecule binds across the dimer.

The protein resides in the cytoplasm. The catalysed reaction is tRNA(Ser) + L-serine + ATP = L-seryl-tRNA(Ser) + AMP + diphosphate + H(+). It catalyses the reaction tRNA(Sec) + L-serine + ATP = L-seryl-tRNA(Sec) + AMP + diphosphate + H(+). Its pathway is aminoacyl-tRNA biosynthesis; selenocysteinyl-tRNA(Sec) biosynthesis; L-seryl-tRNA(Sec) from L-serine and tRNA(Sec): step 1/1. Its function is as follows. Catalyzes the attachment of serine to tRNA(Ser). Is also able to aminoacylate tRNA(Sec) with serine, to form the misacylated tRNA L-seryl-tRNA(Sec), which will be further converted into selenocysteinyl-tRNA(Sec). This is Serine--tRNA ligase from Streptococcus pyogenes serotype M28 (strain MGAS6180).